Here is a 49-residue protein sequence, read N- to C-terminus: Small, acid-soluble spore protein K (49 aa).

Residues Met-1–Arg-49 are disordered. The span at Pro-39–Arg-49 shows a compositional bias: basic and acidic residues.

The protein belongs to the SspK family.

It is found in the spore core. The sequence is that of Small, acid-soluble spore protein K from Bacillus pumilus (strain SAFR-032).